We begin with the raw amino-acid sequence, 121 residues long: Small ribosomal subunit protein uS13 (121 aa).

The segment at 95–121 (LPMRGQRTRTNARTRKGPRKAAASLKK) is disordered.

The protein belongs to the universal ribosomal protein uS13 family. In terms of assembly, part of the 30S ribosomal subunit. Forms a loose heterodimer with protein S19. Forms two bridges to the 50S subunit in the 70S ribosome.

Located at the top of the head of the 30S subunit, it contacts several helices of the 16S rRNA. In the 70S ribosome it contacts the 23S rRNA (bridge B1a) and protein L5 of the 50S subunit (bridge B1b), connecting the 2 subunits; these bridges are implicated in subunit movement. Contacts the tRNAs in the A and P-sites. The sequence is that of Small ribosomal subunit protein uS13 from Polaromonas naphthalenivorans (strain CJ2).